The following is a 79-amino-acid chain: Cytochrome c oxidase assembly factor 6 homolog (79 aa).

Positions 9 to 52 constitute a CHCH domain; it reads RQACWGARDLYWRCLDDNAEDAARCQKLRSSFEASCPQQWIKYF. The Cx9C motif signature appears at 12-22; sequence CWGARDLYWRC. Intrachain disulfides connect Cys12-Cys44 and Cys22-Cys33. A Cx10C motif motif is present at residues 33 to 44; that stretch reads CQKLRSSFEASC.

It belongs to the cytochrome c oxidase subunit 6B family. In terms of assembly, found in a complex with TMEM177, COX20, MT-CO2/COX2, COX18, SCO1 and SCO2. Interacts with COA1, MT-CO2/COX2, SCO1, SCO2 and COX20. Interacts with COX20 in a MT-CO2/COX2- and COX18-dependent manner. Interacts with COX16.

The protein resides in the mitochondrion. It localises to the mitochondrion intermembrane space. In terms of biological role, involved in the maturation of the mitochondrial respiratory chain complex IV subunit MT-CO2/COX2. Thereby, may regulate early steps of complex IV assembly. Mitochondrial respiratory chain complex IV or cytochrome c oxidase is the component of the respiratory chain that catalyzes the transfer of electrons from intermembrane space cytochrome c to molecular oxygen in the matrix and as a consequence contributes to the proton gradient involved in mitochondrial ATP synthesis. May also be required for efficient formation of respiratory supercomplexes comprised of complexes III and IV. The protein is Cytochrome c oxidase assembly factor 6 homolog (Coa6) of Mus musculus (Mouse).